We begin with the raw amino-acid sequence, 419 residues long: Argininosuccinate synthase (419 aa).

9–17 (AYSGGLDTS) lines the ATP pocket. An L-citrulline-binding site is contributed by tyrosine 87. Position 117 (glycine 117) interacts with ATP. Residues threonine 119, asparagine 123, and aspartate 124 each coordinate L-aspartate. Residue asparagine 123 coordinates L-citrulline. 5 residues coordinate L-citrulline: arginine 127, serine 175, serine 184, glutamate 260, and tyrosine 272.

Belongs to the argininosuccinate synthase family. Type 1 subfamily. Homotetramer.

It localises to the cytoplasm. It carries out the reaction L-citrulline + L-aspartate + ATP = 2-(N(omega)-L-arginino)succinate + AMP + diphosphate + H(+). It functions in the pathway amino-acid biosynthesis; L-arginine biosynthesis; L-arginine from L-ornithine and carbamoyl phosphate: step 2/3. The protein is Argininosuccinate synthase of Brevibacillus brevis (strain 47 / JCM 6285 / NBRC 100599).